Here is an 872-residue protein sequence, read N- to C-terminus: DNA polymerase 1 (872 aa).

This sequence belongs to the DNA polymerase type-B family.

The catalysed reaction is DNA(n) + a 2'-deoxyribonucleoside 5'-triphosphate = DNA(n+1) + diphosphate. The protein is DNA polymerase 1 (pol-alpha) of Sulfurisphaera ohwakuensis.